The chain runs to 385 residues: Pectate lyase E (385 aa).

A signal peptide spans 1–30; the sequence is MKNTRVRSIGTKSLLAAVVTAALMATSAYA. Residue Asp164 participates in Ca(2+) binding. Repeat 1 spans residues 177-182; the sequence is DHVTIS. A 2 X 6 AA approximate repeats region spans residues 177–218; the sequence is DHVTISDGSFTDDKYTTKDGEKYVQHDGALDIKKGSDYVTIS. Position 207 (Asp207) interacts with Ca(2+). Repeat 2 spans residues 213–218; it reads DYVTIS. Arg260 is a catalytic residue.

This sequence belongs to the polysaccharide lyase 1 family. PLBC subfamily. Ca(2+) is required as a cofactor.

It is found in the secreted. It catalyses the reaction Eliminative cleavage of (1-&gt;4)-alpha-D-galacturonan to give oligosaccharides with 4-deoxy-alpha-D-galact-4-enuronosyl groups at their non-reducing ends.. The protein operates within glycan metabolism; pectin degradation; 2-dehydro-3-deoxy-D-gluconate from pectin: step 2/5. In terms of biological role, involved in maceration and soft-rotting of plant tissue. The protein is Pectate lyase E (pelE) of Dickeya chrysanthemi (Pectobacterium chrysanthemi).